A 324-amino-acid chain; its full sequence is Myoblast determination protein 1 homolog (324 aa).

Positions 125–146 (VDSQHEDTTTSTAGGAGVGGPR) are disordered. Residues 155–206 (DRRKAATMRERRRLRKVNEAFEVVKQRTCPNPNQRLPKVEILRSAIDYINNL) form the bHLH domain. A disordered region spans residues 251 to 272 (YNPENMFDDDDLTDSDDDRDHH). Over residues 256–267 (MFDDDDLTDSDD) the composition is skewed to acidic residues.

Efficient DNA binding requires dimerization with another bHLH protein. As to expression, body wall muscle cells; in clonal muscle precursors, in a set of early embryonic blastomeres (the ms-granddaughters), and in six glial-like cells called GLRS.

It is found in the nucleus. In terms of biological role, involved in myogenesis, in cooperation with transcription factors unc-120 and hnd-1. Acts redundantly with fozi-1 to promote body wall muscle cell and coelomocyte specification in postembryonic mesoderm progenitors, probably through suppression of sem-2. The polypeptide is Myoblast determination protein 1 homolog (Caenorhabditis elegans).